A 220-amino-acid chain; its full sequence is 1-Cys peroxiredoxin B (220 aa).

Residues 4-165 (LTLGDVVPDL…VLRATDALLT (162 aa)) enclose the Thioredoxin domain. Cys-46 acts as the Cysteine sulfenic acid (-SOH) intermediate in catalysis. The Bipartite nuclear localization signal motif lies at 195-218 (KARFPAGFETAQLPSNKCYLRFTQ).

The protein belongs to the peroxiredoxin family. Prx6 subfamily.

It is found in the nucleus. It localises to the cytoplasm. It carries out the reaction a hydroperoxide + [thioredoxin]-dithiol = an alcohol + [thioredoxin]-disulfide + H2O. Functionally, thiol-specific peroxidase that catalyzes the reduction of hydrogen peroxide and organic hydroperoxides to water and alcohols, respectively. Seems to contribute to the inhibition of germination during stress. This chain is 1-Cys peroxiredoxin B, found in Oryza sativa subsp. japonica (Rice).